Consider the following 266-residue polypeptide: MNKPIGVIDSGVGGLTVAKEIMRQLPNETIYYLGDIGRCPYGPRPGEQVKQYTVEIARKLMEFDIKMLVIACNTATAVALEYLQKTLSIPVIGVIEPGARTAIMTTRNQNVLVLGTEGTIKSEAYRTHIKRINPHVEVHGVACPGFVPLVEQMRYSDPTITSIVIHQTLKRWRNSESDTVILGCTHYPLLYKPIYDYFGGKKTVISSGLETAREVSALLTFSNEHASYTEHPDHRFFATGDTTHITNIIKEWLNLSVNVERISVND.

Residues 9 to 10 (DS) and 41 to 42 (YG) each bind substrate. The active-site Proton donor/acceptor is the cysteine 72. Position 73 to 74 (73 to 74 (NT)) interacts with substrate. Cysteine 184 acts as the Proton donor/acceptor in catalysis. Position 185-186 (185-186 (TH)) interacts with substrate.

This sequence belongs to the aspartate/glutamate racemases family. In terms of assembly, homodimer.

The enzyme catalyses L-glutamate = D-glutamate. It functions in the pathway cell wall biogenesis; peptidoglycan biosynthesis. Its function is as follows. Provides the (R)-glutamate required for cell wall biosynthesis. This Staphylococcus aureus (strain MRSA252) protein is Glutamate racemase.